The chain runs to 695 residues: Elongation factor G (695 aa).

In terms of domain architecture, tr-type G spans 10 to 285; the sequence is AKTRNIGIMA…AVIDYLPSPI (276 aa). Residues 19-26, 83-87, and 137-140 contribute to the GTP site; these read AHIDAGKT, DTPGH, and NKMD.

Belongs to the TRAFAC class translation factor GTPase superfamily. Classic translation factor GTPase family. EF-G/EF-2 subfamily.

It is found in the cytoplasm. In terms of biological role, catalyzes the GTP-dependent ribosomal translocation step during translation elongation. During this step, the ribosome changes from the pre-translocational (PRE) to the post-translocational (POST) state as the newly formed A-site-bound peptidyl-tRNA and P-site-bound deacylated tRNA move to the P and E sites, respectively. Catalyzes the coordinated movement of the two tRNA molecules, the mRNA and conformational changes in the ribosome. This is Elongation factor G from Limosilactobacillus reuteri (strain DSM 20016) (Lactobacillus reuteri).